A 105-amino-acid chain; its full sequence is Guanyl-specific ribonuclease Ms (105 aa).

Intrachain disulfides connect Cys-3–Cys-11 and Cys-7–Cys-102. His-39 is a catalytic residue. Glu-57 serves as the catalytic Proton acceptor. The Proton donor role is filled by His-91.

It belongs to the ribonuclease N1/T1 family.

The catalysed reaction is [RNA] containing guanosine + H2O = an [RNA fragment]-3'-guanosine-3'-phosphate + a 5'-hydroxy-ribonucleotide-3'-[RNA fragment].. This is Guanyl-specific ribonuclease Ms from Aspergillus phoenicis (Aspergillus saitoi).